A 160-amino-acid chain; its full sequence is SsrA-binding protein (160 aa).

It belongs to the SmpB family.

The protein localises to the cytoplasm. Its function is as follows. Required for rescue of stalled ribosomes mediated by trans-translation. Binds to transfer-messenger RNA (tmRNA), required for stable association of tmRNA with ribosomes. tmRNA and SmpB together mimic tRNA shape, replacing the anticodon stem-loop with SmpB. tmRNA is encoded by the ssrA gene; the 2 termini fold to resemble tRNA(Ala) and it encodes a 'tag peptide', a short internal open reading frame. During trans-translation Ala-aminoacylated tmRNA acts like a tRNA, entering the A-site of stalled ribosomes, displacing the stalled mRNA. The ribosome then switches to translate the ORF on the tmRNA; the nascent peptide is terminated with the 'tag peptide' encoded by the tmRNA and targeted for degradation. The ribosome is freed to recommence translation, which seems to be the essential function of trans-translation. This Dinoroseobacter shibae (strain DSM 16493 / NCIMB 14021 / DFL 12) protein is SsrA-binding protein.